Consider the following 150-residue polypeptide: 3-dehydroquinate dehydratase (150 aa).

Tyr-23 serves as the catalytic Proton acceptor. Substrate-binding residues include Asn-79, His-85, and Asp-92. Catalysis depends on His-105, which acts as the Proton donor. Substrate is bound by residues 106–107 and Arg-116; that span reads IS.

The protein belongs to the type-II 3-dehydroquinase family. As to quaternary structure, homododecamer.

The enzyme catalyses 3-dehydroquinate = 3-dehydroshikimate + H2O. It participates in metabolic intermediate biosynthesis; chorismate biosynthesis; chorismate from D-erythrose 4-phosphate and phosphoenolpyruvate: step 3/7. Catalyzes a trans-dehydration via an enolate intermediate. The chain is 3-dehydroquinate dehydratase from Marinomonas sp. (strain MWYL1).